A 324-amino-acid chain; its full sequence is Beta-ketoacyl-[acyl-carrier-protein] synthase III (324 aa).

Active-site residues include cysteine 112 and histidine 249. Residues 250 to 254 (QANDR) form an ACP-binding region. The active site involves asparagine 279.

Belongs to the thiolase-like superfamily. FabH family. Homodimer.

The protein localises to the cytoplasm. It carries out the reaction malonyl-[ACP] + acetyl-CoA + H(+) = 3-oxobutanoyl-[ACP] + CO2 + CoA. The protein operates within lipid metabolism; fatty acid biosynthesis. Catalyzes the condensation reaction of fatty acid synthesis by the addition to an acyl acceptor of two carbons from malonyl-ACP. Catalyzes the first condensation reaction which initiates fatty acid synthesis and may therefore play a role in governing the total rate of fatty acid production. Possesses both acetoacetyl-ACP synthase and acetyl transacylase activities. Its substrate specificity determines the biosynthesis of branched-chain and/or straight-chain of fatty acids. In Streptococcus pneumoniae serotype 2 (strain D39 / NCTC 7466), this protein is Beta-ketoacyl-[acyl-carrier-protein] synthase III.